An 806-amino-acid polypeptide reads, in one-letter code: Lon protease 1 (806 aa).

Residues 31–235 form the Lon N-terminal domain; that stretch reads VPLIAVPSHP…KVLELIYEEL (205 aa). Residue 389 to 396 coordinates ATP; sequence GPPGVGKT. The 181-residue stretch at 626 to 806 folds into the Lon proteolytic domain; it reads AMYSGMVMGL…NMREVIKLLF (181 aa). Active-site residues include serine 714 and lysine 757.

It belongs to the peptidase S16 family. In terms of assembly, homohexamer. Organized in a ring with a central cavity.

It is found in the cytoplasm. It carries out the reaction Hydrolysis of proteins in presence of ATP.. ATP-dependent serine protease that mediates the selective degradation of mutant and abnormal proteins as well as certain short-lived regulatory proteins. Required for cellular homeostasis and for survival from DNA damage and developmental changes induced by stress. Degrades polypeptides processively to yield small peptide fragments that are 5 to 10 amino acids long. Binds to DNA in a double-stranded, site-specific manner. The protein is Lon protease 1 of Borreliella burgdorferi (strain ATCC 35210 / DSM 4680 / CIP 102532 / B31) (Borrelia burgdorferi).